Here is a 273-residue protein sequence, read N- to C-terminus: Ribosomal RNA small subunit methyltransferase A (273 aa).

S-adenosyl-L-methionine contacts are provided by asparagine 18, leucine 20, glycine 45, glutamate 66, aspartate 91, and asparagine 113.

It belongs to the class I-like SAM-binding methyltransferase superfamily. rRNA adenine N(6)-methyltransferase family. RsmA subfamily.

Its subcellular location is the cytoplasm. It catalyses the reaction adenosine(1518)/adenosine(1519) in 16S rRNA + 4 S-adenosyl-L-methionine = N(6)-dimethyladenosine(1518)/N(6)-dimethyladenosine(1519) in 16S rRNA + 4 S-adenosyl-L-homocysteine + 4 H(+). Functionally, specifically dimethylates two adjacent adenosines (A1518 and A1519) in the loop of a conserved hairpin near the 3'-end of 16S rRNA in the 30S particle. May play a critical role in biogenesis of 30S subunits. This Escherichia coli O17:K52:H18 (strain UMN026 / ExPEC) protein is Ribosomal RNA small subunit methyltransferase A.